Here is a 297-residue protein sequence, read N- to C-terminus: Nicotinate-nucleotide pyrophosphorylase [carboxylating] (297 aa).

Residues 8–12 form an important for hexamer formation region; it reads LLLPP. Residues Arg-102, 138-139, 160-161, Lys-171, Glu-201, Asp-222, 248-250, and Gly-270 each bind quinolinate; these read RK, HR, and SGG.

The protein belongs to the NadC/ModD family. Hexamer formed by 3 homodimers.

It catalyses the reaction nicotinate beta-D-ribonucleotide + CO2 + diphosphate = quinolinate + 5-phospho-alpha-D-ribose 1-diphosphate + 2 H(+). It participates in cofactor biosynthesis; NAD(+) biosynthesis; nicotinate D-ribonucleotide from quinolinate: step 1/1. With respect to regulation, activity toward QA is slightly repressed by phosphoribosylpyrophosphate (PRPP) in both a competitive and a non-competitive manner. Competitively inhibited by phthalic acid (PHT). Functionally, involved in the catabolism of quinolinic acid (QA). The chain is Nicotinate-nucleotide pyrophosphorylase [carboxylating] (QPRT) from Homo sapiens (Human).